An 86-amino-acid polypeptide reads, in one-letter code: RNA-binding protein Hfq (86 aa).

Residues 9–68 (DPFLNALRRERIPVSIYLVNGIKLQGQIESFDQFVILLKNTVNQMVYKHAISTVVPARPV) enclose the Sm domain. Residues 65 to 86 (ARPVSHHSGERGSDRPSEKSED) form a disordered region. A compositionally biased stretch (basic and acidic residues) spans 71–86 (HSGERGSDRPSEKSED).

This sequence belongs to the Hfq family. Homohexamer.

In terms of biological role, RNA chaperone that binds small regulatory RNA (sRNAs) and mRNAs to facilitate mRNA translational regulation in response to envelope stress, environmental stress and changes in metabolite concentrations. Also binds with high specificity to tRNAs. The sequence is that of RNA-binding protein Hfq from Vibrio vulnificus (strain YJ016).